Consider the following 460-residue polypeptide: A-type ATP synthase subunit B (460 aa).

It belongs to the ATPase alpha/beta chains family. In terms of assembly, has multiple subunits with at least A(3), B(3), C, D, E, F, H, I and proteolipid K(x).

It localises to the cell membrane. Component of the A-type ATP synthase that produces ATP from ADP in the presence of a proton gradient across the membrane. The B chain is a regulatory subunit. This chain is A-type ATP synthase subunit B, found in Methanosarcina barkeri (strain Fusaro / DSM 804).